A 246-amino-acid polypeptide reads, in one-letter code: MAGHSKWANIQHRKGRQDKLRAKLFSKLSKEITVAAKMGDPDPDKNPRLRLAVKEAKSQSVPKDVIERAIKKSLGGEGENYDEIRYEGYGPGGVAVIVEAMTDNRNRTASTVRSTFSKNGGNLGETGSVSFMFERKGQVSYPAEAGDADTVMMAAIEAGAEDVESDESGHIIWCADTDLNEVSTALEAELGESESTKLVWRPTTTTELDLEGMQKLMKLLDALEDDDDVQNVTANFEASDEVMAQL.

The protein belongs to the TACO1 family.

The protein localises to the cytoplasm. The sequence is that of Probable transcriptional regulatory protein Dshi_2762 from Dinoroseobacter shibae (strain DSM 16493 / NCIMB 14021 / DFL 12).